A 218-amino-acid chain; its full sequence is Glutathione S-transferase (218 aa).

The GST N-terminal domain maps to 3 to 88; the sequence is SKPVLGYWDI…YIGRKYKLTG (86 aa). Residues 9-10, 43-46, lysine 50, 59-60, and 72-73 each bind glutathione; these read YW, RSAW, NL, and QT. Residues 90 to 206 form the GST C-terminal domain; the sequence is NEPEELRVSL…YIKAQQPKLF (117 aa). Tyrosine 116 serves as a coordination point for substrate.

Belongs to the GST superfamily. Mu family.

It carries out the reaction RX + glutathione = an S-substituted glutathione + a halide anion + H(+). In terms of biological role, conjugation of reduced glutathione to a wide number of exogenous and endogenous hydrophobic electrophiles. In Tyrophagus putrescentiae (Mold mite), this protein is Glutathione S-transferase.